A 1358-amino-acid polypeptide reads, in one-letter code: Protein STU1 (1358 aa).

Disordered stretches follow at residues 915–950 (FVAD…SHGF) and 970–990 (QPET…DESN). The span at 926–949 (DDTKKNGSDVVDHEEIRDHEESHG) shows a compositional bias: basic and acidic residues. The span at 973 to 990 (TVDENVDPMEVDSPDESN) shows a compositional bias: acidic residues.

This sequence belongs to the CLASP family. As to quaternary structure, interacts with microtubules.

The protein localises to the cytoplasm. The protein resides in the cytoskeleton. It localises to the nucleus. Its subcellular location is the spindle. Microtubule binding protein that promotes the stabilization of dynamic microtubules. Required for mitotic spindle formation. The chain is Protein STU1 (STU1) from Kluyveromyces lactis (strain ATCC 8585 / CBS 2359 / DSM 70799 / NBRC 1267 / NRRL Y-1140 / WM37) (Yeast).